A 247-amino-acid chain; its full sequence is Thioredoxin reductase-like selenoprotein T homolog selt-1.1 (247 aa).

The first 26 residues, 1–26, serve as a signal peptide directing secretion; the sequence is MSRFGVFIIGVLFFMSVCDVLRTVSA. A disulfide bridge connects residues cysteine 92 and cysteine 95.

This sequence belongs to the SelWTH family. SELT subfamily. Broadly expressed in neurons of nervous system including ADL, ASH, ASI, ASJ, ASK and AWB amphid sensilla neurons, in epithelial cells including hypodermal, arcade, pharyngeal, vulval and rectal cells, and in somatic muscle cells of the head, neck and body wall, and non-striated pharyngeal muscles.

It is found in the endoplasmic reticulum. It carries out the reaction [thioredoxin]-dithiol + NADP(+) = [thioredoxin]-disulfide + NADPH + H(+). Probably has thioredoxin reductase-like oxidoreductase activity. Plays a role in regulating the oxidative stress response, and odorant and pathogenic bacteria avoidance behavior. This Caenorhabditis elegans protein is Thioredoxin reductase-like selenoprotein T homolog selt-1.1.